A 183-amino-acid polypeptide reads, in one-letter code: MSQPPKILLLYAHPEPQDSVANRVLLQPAQQLANVTVHDLYAHYPDFFIDIHHEQQLLREHQVIVFQHPFYTYSCPALLKEWLDRVLSRGFANGIGGNALAGKYWRSVITTGEPEDAYHPDGNNRYPMEDLLRPFELTAAMCRMHWMHPMIVYWARRLQPDVLSSQARAYGEWLASPLPEEER.

It belongs to the NAD(P)H dehydrogenase (quinone) family. KefG subfamily. Interacts with KefB.

Its subcellular location is the cell inner membrane. The catalysed reaction is a quinone + NADH + H(+) = a quinol + NAD(+). It carries out the reaction a quinone + NADPH + H(+) = a quinol + NADP(+). In terms of biological role, regulatory subunit of a potassium efflux system that confers protection against electrophiles. Required for full activity of KefB. This Pectobacterium carotovorum subsp. carotovorum (strain PC1) protein is Glutathione-regulated potassium-efflux system ancillary protein KefG.